A 446-amino-acid polypeptide reads, in one-letter code: MKFRSTALVKGFRQSAPYVNAHRDKTVVIMLGGEAIADPNFANIVNDIALLNSLGLRIVIVYGTRPQMRSLLKQTEHHAPFHKGIRITDEQTLELVKQIAGQLQLDITARLSMSLNNTPMAGAQINVISGNFVIAQPLGVDDGIDYCHSGRVRRIDTQGINRMLDQQSIVLLGPVASSVTGECFNLLSEDVATQLAIRLNADKLIGFCSEQGVLNEKGQILAELFPSEAEEILQRLEKELTPENGKLTGTMRFLKGAISACKAGVPRSHLISYKEDGALIQELFSFDGIGTQVVMASSEQVRDAEIDDIGGILDLIRPLEEEGILVRRSREQLEQEIAQFTIIEKDGLVIACAALYPFPEEGMAEMGCVAVHPDYRDGDRGVTLLNRLRSKAKQFKLSQLFVLTTRSLHWFREQGFIEVDVSHLPIKKQKLYNFQRKSKILVLKGL.

The N-acetyltransferase domain maps to 299 to 438 (EQVRDAEIDD…QKLYNFQRKS (140 aa)).

The protein belongs to the acetyltransferase family. ArgA subfamily.

It is found in the cytoplasm. The enzyme catalyses L-glutamate + acetyl-CoA = N-acetyl-L-glutamate + CoA + H(+). Its pathway is amino-acid biosynthesis; L-arginine biosynthesis; N(2)-acetyl-L-ornithine from L-glutamate: step 1/4. The protein is Amino-acid acetyltransferase of Aliivibrio fischeri (strain ATCC 700601 / ES114) (Vibrio fischeri).